The chain runs to 1145 residues: Cation channel sperm-associated auxiliary subunit gamma 2 (1145 aa).

The N-terminal stretch at Met-1–Ala-38 is a signal peptide. Residues Glu-39–Arg-1061 are Extracellular-facing. 2 disulfides stabilise this stretch: Cys-45–Cys-106 and Cys-160–Cys-166. N-linked (GlcNAc...) asparagine glycosylation is present at Asn-103. Asn-178 is a glycosylation site (N-linked (GlcNAc...) asparagine). An intrachain disulfide couples Cys-289 to Cys-344. 4 N-linked (GlcNAc...) asparagine glycosylation sites follow: Asn-356, Asn-402, Asn-672, and Asn-743. 6 disulfide bridges follow: Cys-395–Cys-403, Cys-634–Cys-856, Cys-802–Cys-830, Cys-878–Cys-1042, Cys-905–Cys-914, and Cys-1006–Cys-1012. Asn-1038 is a glycosylation site (N-linked (GlcNAc...) asparagine). A helical membrane pass occupies residues Thr-1062–Phe-1083. The Cytoplasmic portion of the chain corresponds to Cys-1084 to Ala-1145.

Belongs to the CATSPERG family. As to quaternary structure, component of the CatSper complex or CatSpermasome composed of the core pore-forming members CATSPER1, CATSPER2, CATSPER3 and CATSPER4 as well as auxiliary members CATSPERB, CATSPERG2, CATSPERD, CATSPERE, CATSPERZ, C2CD6/CATSPERT, SLCO6C1, TMEM249, TMEM262 and EFCAB9. HSPA1 may be an additional auxiliary complex member. The core complex members CATSPER1, CATSPER2, CATSPER3 and CATSPER4 form a heterotetrameric channel. The auxiliary CATSPERB, CATSPERG2, CATSPERD and CATSPERE subunits form a pavilion-like structure over the pore which stabilizes the complex through interactions with CATSPER4, CATSPER3, CATSPER1 and CATSPER2 respectively. SLCO6C1 interacts with CATSPERE and TMEM262/CATSPERH interacts with CATSPERB, further stabilizing the complex. C2CD6/CATSPERT interacts at least with CATSPERD and is required for targeting the CatSper complex in the flagellar membrane. In terms of tissue distribution, testis-specific. Specifically expressed in the principal piece of the sperm tail (at protein level). Expressed in spermatocytes and spermatids within the seminiferous tubule but not in interstitial cells.

It localises to the cell projection. It is found in the cilium. The protein localises to the flagellum membrane. In terms of biological role, auxiliary component of the CatSper complex, a complex involved in sperm cell hyperactivation. Sperm cell hyperactivation is needed for sperm motility which is essential late in the preparation of sperm for fertilization. This chain is Cation channel sperm-associated auxiliary subunit gamma 2, found in Mus musculus (Mouse).